Reading from the N-terminus, the 157-residue chain is Protein Smg (157 aa).

The protein belongs to the Smg family.

The protein is Protein Smg of Buchnera aphidicola subsp. Acyrthosiphon pisum (strain 5A).